The chain runs to 92 residues: CRISPR-associated endoribonuclease Cas2 3 (92 aa).

A Mg(2+)-binding site is contributed by Asp9.

Belongs to the CRISPR-associated endoribonuclease Cas2 protein family. As to quaternary structure, homodimer, forms a heterotetramer with a Cas1 homodimer. Mg(2+) serves as cofactor.

Its function is as follows. CRISPR (clustered regularly interspaced short palindromic repeat), is an adaptive immune system that provides protection against mobile genetic elements (viruses, transposable elements and conjugative plasmids). CRISPR clusters contain sequences complementary to antecedent mobile elements and target invading nucleic acids. CRISPR clusters are transcribed and processed into CRISPR RNA (crRNA). Functions as a ssRNA-specific endoribonuclease. Involved in the integration of spacer DNA into the CRISPR cassette. This is CRISPR-associated endoribonuclease Cas2 3 from Synechocystis sp. (strain ATCC 27184 / PCC 6803 / Kazusa).